The sequence spans 166 residues: Large ribosomal subunit protein bL9 (166 aa).

Belongs to the bacterial ribosomal protein bL9 family.

Functionally, binds to the 23S rRNA. This Brachyspira hyodysenteriae (strain ATCC 49526 / WA1) protein is Large ribosomal subunit protein bL9.